A 451-amino-acid polypeptide reads, in one-letter code: uncharacterized protein (451 aa).

Residues 1-451 (MSETENKTTT…KKEAAKNKSK (451 aa)) form a disordered region. Positions 9–22 (TTETPTTTDSTVTT) are enriched in low complexity. The span at 44–54 (VKNQLSNTRTR) shows a compositional bias: polar residues. Positions 73 to 99 (KLIDTKERKEKKEKKEKEPKEPKEPKE) are enriched in basic and acidic residues. Residues 114 to 147 (GDEEEDEEKEEDEEQKEEQSQEEDSEESEEEQNS) show a composition bias toward acidic residues. Basic residues predominate over residues 152–162 (KKKKKQAKKVA). 3 stretches are compositionally biased toward basic and acidic residues: residues 163 to 192 (KKET…EKEA), 199 to 210 (STEKKEKEEKPK), and 217 to 230 (KKDQ…KDGD). Residues 232 to 244 (STTTTATATTTTD) are compositionally biased toward low complexity. 2 stretches are compositionally biased toward basic and acidic residues: residues 284 to 303 (TEEK…ETKK) and 311 to 340 (AAAE…DDKP). A compositionally biased stretch (low complexity) spans 341-355 (AATTTTTTAAAATTT). Over residues 356–383 (EEPKEKITKPAADKKKAPANKKAEKDQS) the composition is skewed to basic and acidic residues. The segment covering 393-425 (TTTATTTTTNKDATAPTTTTNKDATAPTTTTTK) has biased composition (low complexity). Basic and acidic residues predominate over residues 441–451 (PKKEAAKNKSK).

This is an uncharacterized protein from Dictyostelium discoideum (Social amoeba).